The chain runs to 114 residues: Aspartate 1-decarboxylase (114 aa).

Serine 25 functions as the Schiff-base intermediate with substrate; via pyruvic acid in the catalytic mechanism. Residue serine 25 is modified to Pyruvic acid (Ser). Threonine 57 contributes to the substrate binding site. Tyrosine 58 (proton donor) is an active-site residue. Residue 71-73 (GAA) participates in substrate binding.

This sequence belongs to the PanD family. Heterooctamer of four alpha and four beta subunits. The cofactor is pyruvate. In terms of processing, is synthesized initially as an inactive proenzyme, which is activated by self-cleavage at a specific serine bond to produce a beta-subunit with a hydroxyl group at its C-terminus and an alpha-subunit with a pyruvoyl group at its N-terminus.

Its subcellular location is the cytoplasm. It carries out the reaction L-aspartate + H(+) = beta-alanine + CO2. Its pathway is cofactor biosynthesis; (R)-pantothenate biosynthesis; beta-alanine from L-aspartate: step 1/1. Functionally, catalyzes the pyruvoyl-dependent decarboxylation of aspartate to produce beta-alanine. The protein is Aspartate 1-decarboxylase of Campylobacter hominis (strain ATCC BAA-381 / DSM 21671 / CCUG 45161 / LMG 19568 / NCTC 13146 / CH001A).